We begin with the raw amino-acid sequence, 66 residues long: Large ribosomal subunit protein bL33c (66 aa).

The protein belongs to the bacterial ribosomal protein bL33 family.

The protein localises to the plastid. Its subcellular location is the chloroplast. The chain is Large ribosomal subunit protein bL33c from Citrus sinensis (Sweet orange).